The primary structure comprises 526 residues: MSTTVRPDEVSSILRKQLAGFESEAEVYDVGTVLQVGDGIARVYGLSKVAAGELLEFPNNVMGMALNLEEDNVGAVLFGESNLVKEGDTVKRTSILASIPVGEAMLGRVINPLGEPIDGKGTIDTQIRLPLERRAPGVIYRKSVHEPLQTGLKAIDSMIPIGRGQRELIIGDRQTGKTAVAIDTIINQKGKGVFCIYVAIGLKGSTVAQVVNTLEKYDAMEYTTVISATASDPAPLQFIAPFAGATLGEYFRDTGRHALVVYDDLSKQAVAYRQVSLLLRRPPGREAYPGDVFYLHSRLLERAAKITDDIEVARKMNDLPDALKSLVKGGGSLTALPVIETQAGDVSAYIPTNVISITDGQIFLESNLFNSGQRPAINVGISVSRVGGSAQIKAMKKVAGTLRLDLAQFRELEAFSKFGSDLDKTTKAQLDRGARLVEILKQGQYIPMPVEKQVAIIFLGTQGLLDTVDLRFIRKFEEEFLSLLEIKHNDLLAKIASSGALEADTAAKLKDIAVKFVTVFKEKNKA.

171-178 serves as a coordination point for ATP; sequence GDRQTGKT.

This sequence belongs to the ATPase alpha/beta chains family. In terms of assembly, F-type ATPases have 2 components, CF(1) - the catalytic core - and CF(0) - the membrane proton channel. CF(1) has five subunits: alpha(3), beta(3), gamma(1), delta(1), epsilon(1). CF(0) has four main subunits: a, b, b' and c.

It localises to the cell inner membrane. It catalyses the reaction ATP + H2O + 4 H(+)(in) = ADP + phosphate + 5 H(+)(out). Functionally, produces ATP from ADP in the presence of a proton gradient across the membrane. The alpha chain is a regulatory subunit. This Pelodictyon phaeoclathratiforme (strain DSM 5477 / BU-1) protein is ATP synthase subunit alpha.